The chain runs to 688 residues: Protein SDA1 homolog (688 aa).

Phosphoserine is present on residues Ser232, Ser234, and Ser236. Residues 254–318 are a coiled coil; sequence KKSSKNKKKL…ERFEVKMMLM (65 aa). Acidic residues predominate over residues 484 to 498; the sequence is VENEEENAEGDEDGW. Residues 484-524 form a disordered region; sequence VENEEENAEGDEDGWESASLSDEADSDGEWVDVHHSSDEEQ. Over residues 514-524 the composition is skewed to basic and acidic residues; it reads VDVHHSSDEEQ. A phosphoserine mark is found at Ser586 and Ser596. Residues 605-688 are disordered; that stretch reads KKPKSDKETR…ALLKKRKRMK (84 aa). Over residues 668-681 the composition is skewed to basic and acidic residues; sequence SFREKQLALRDALL.

This sequence belongs to the SDA1 family.

It localises to the nucleus. The protein localises to the nucleolus. In terms of biological role, required for 60S pre-ribosomal subunits export to the cytoplasm. This is Protein SDA1 homolog (SDAD1) from Bos taurus (Bovine).